We begin with the raw amino-acid sequence, 880 residues long: GATOR2 complex protein MIOS-A (880 aa).

WD repeat units follow at residues 60–102, 113–157, 185–224, 226–264, 268–309, and 399–441; these read SDTP…NSKC, KHAR…TPEV, GQND…QKMF, NTKA…KPVL, EQPK…TPIG, and RLRA…KQYA. The C4-type zinc finger occupies 740 to 786; the sequence is VSCNFCGKSISYSCSSVPHQGRGFSQYGVSGSPTKSKFTSCPGCRKP. Zn(2+) contacts are provided by C742, C745, C780, C783, C793, C832, C835, H837, H840, H843, C854, C859, and C863. The RING-type; atypical zinc-finger motif lies at 787–868; the sequence is LPRCALCLIN…CSCKCMQLDT (82 aa).

This sequence belongs to the WD repeat mio family. Component of the GATOR2 subcomplex, composed of MIOS, SEC13, SEH1L, WDR24 and WDR59. The GATOR2 complex interacts with CASTOR1 and CASTOR2; the interaction is negatively regulated by arginine. The GATOR2 complex interacts with SESN1, SESN2 and SESN3; the interaction is negatively regulated by amino acids. Interacts with SAR1; the interaction is direct, disrupted by leucine and mediates the interaction of SAR1 with the GATOR2 complex to negatively regulate the TORC1 signaling upon leucine deprivation.

It is found in the lysosome membrane. The GATOR2 complex is negatively regulated by the upstream amino acid sensors CASTOR1 and SESN2, which sequester the GATOR2 complex in absence of amino acids. In the presence of abundant amino acids, GATOR2 is released from CASTOR1 and SESN2 and activated. In terms of biological role, as a component of the GATOR2 complex, functions as an activator of the amino acid-sensing branch of the mTORC1 signaling pathway. The GATOR2 complex indirectly activates mTORC1 through the inhibition of the GATOR1 subcomplex. GATOR2 probably acts as an E3 ubiquitin-protein ligase toward GATOR1. In the presence of abundant amino acids, the GATOR2 complex mediates ubiquitination of the NPRL2 core component of the GATOR1 complex, leading to GATOR1 inactivation. In the absence of amino acids, GATOR2 is inhibited, activating the GATOR1 complex. Within the GATOR2 complex, MIOS is required to prevent autoubiquitination of WDR24, the catalytic subunit of the complex. This is GATOR2 complex protein MIOS-A from Xenopus laevis (African clawed frog).